A 1159-amino-acid polypeptide reads, in one-letter code: CRISPR-associated endoribonuclease Cas13a (1159 aa).

The binds crRNA repeat and spacer stretch occupies residues 1-11 (MKVTKVGGISH). The tract at residues 1–170 (MKVTKVGGIS…NNIEKVEGKS (170 aa)) is NTD. Binds crRNA repeat stretches follow at residues 139–151 (NKIN…FEKN), 172–176 (RNIIY), 224–233 (REFYHEIIGR), 271–276 (QVFYKY), 294–297 (HFVE), and 301–305 (SQLLK). The helical-1 stretch occupies residues 171–360 (KRNIIYDYYR…YNYYLQDGEI (190 aa)). The interval 319–328 (KIKRIFEYQN) is binds crRNA processing site. Binds crRNA repeat regions lie at residues 336–340 (KLLNK) and 371–378 (QNEAFLRN). Positions 361-508 (ATSDFIARNR…SKKMFQNEIN (148 aa)) are HEPN-like fold 1-I. Residues arginine 472 and histidine 477 each act as for target RNA cleavage in the active site. The segment at 509 to 751 (EKKLKLKIFR…EFLREIKLGN (243 aa)) is helical-2. Residues 519–522 (QLNS) form a binds target RNA region. A binds crRNA spacer region spans residues 547 to 558 (NKNIPFVPSFTK). Positions 590–597 (DAQIYLLK) are binds target RNA. The binds crRNA spacer stretch occupies residues 718-722 (KQEFD). The HEPN-like fold 1-II stretch occupies residues 752 to 813 (ILKYTERLNM…NLDNNRVTED (62 aa)). Residues 780–783 (SLEK) form a binds crRNA repeat region. Residues 804-810 (NLDNNRV) form a binds crRNA spacer and target RNA region. Residues 814–946 (FELEADEIGK…EYTHLKNKVE (133 aa)) are linker. Binds crRNA spacer stretches follow at residues 845–857 (KIYF…IKHR) and 938–942 (YTHLK). Residues 880–946 (YKISIEELKK…EYTHLKNKVE (67 aa)) adopt a coiled-coil conformation. The segment at 947–1159 (FNELNLLQGL…YKMEEKKSEN (213 aa)) is HEPN-like fold 2. The interval 962–963 (HR) is binds crRNA repeat. The segment at 995-998 (FENK) is binds 3'-end of target RNA, in adjacent protein. Active-site for target RNA cleavage residues include arginine 1048 and histidine 1053. Binds crRNA processing site stretches follow at residues 1072 to 1082 (RKLLSYDRKLK) and 1104 to 1108 (IGADK).

The protein belongs to the CRISPR-associated endoribonuclease Cas13a family. As to quaternary structure, crystals show the 3'-end of target RNA interacting with an adjacent protein molecule, and mutagenesis of those amino acid residues decreases target RNA cleavage, but it is not clear if this is physiological. It depends on a divalent metal cation as a cofactor.

Its activity is regulated as follows. Target RNA acts as an activator for non-specific ssRNA cleavage; the target RNA and complementary crRNA must both be at least 20 nucleotides long to activate the HEPN-like catalytic pocket for RNase activity. In terms of biological role, CRISPR (clustered regularly interspaced short palindromic repeat), is an adaptive immune system that provides protection against mobile genetic elements (viruses, transposable elements and conjugative plasmids). CRISPR clusters contain sequences complementary to antecedent mobile elements (spacer sequences) and target invading nucleic acids. Unlike many single-component effectors, this CRISPR-Cas system targets RNA. CRISPR clusters are transcribed from pre-CRISPR RNA (crRNA) and processed into crRNA by this protein. pre-crRNA processing yields a 5'-OH and probably a 2',3'-cyclic phosphate. Also cleaves pre-crRNA from several other type VI-A CRISPR systems. Cleaves linear target ssRNA in a crRNA-dependent fashion, preferentially before U residues. Cleavage of target ssRNA is about 80-fold faster than pre-crRNA processing and uses a different active site. Binding a viable target RNA target activates this protein for non-specific RNA degradation in vitro (called collateral RNA degradation). Activation occurs with 10 fM target RNA. crRNA maturation is not essential for activation of RNA degradation, but lack of mature crRNA (due to mutagenesis) decreases activation levels. This system has a 3' protospacer flanking site in the target RNA (PFS), which is C and unavailable to base pair with crRNA (PFS is equivalent to PAM, the protospacer adjacent motif). The chain is CRISPR-associated endoribonuclease Cas13a from Leptotrichia buccalis (strain ATCC 14201 / DSM 1135 / JCM 12969 / NCTC 10249 / C-1013-b).